Here is a 321-residue protein sequence, read N- to C-terminus: Proline-rich protein 2 (321 aa).

The first 26 residues, 1 to 26 (MRILPKSGGGALCLLFVFALCSVAHS), serve as a signal peptide directing secretion. 24 tandem repeats follow at residues 168-172 (PPLNL), 173-176 (PPLT), 177-181 (FPKIK), 185-189 (PPIYK), 190-194 (PPVVI), 198-202 (PCPPK), 207-211 (PIYKP), 212-217 (PVPIYK), 218-223 (PPVPIY), 225-229 (PPVVI), 234-238 (CPPKI), 240-244 (KPIYK), 245-251 (PPVPIYK), 252-256 (PPVVI), 262-266 (PPLHK), 267-271 (PIYKH), 272-276 (PVPIY), 277-281 (KPIFK), 282-286 (PPVVV), 288-292 (PKKPC), 293-297 (PPLPK), 298-302 (FPHFP), 303-307 (PKYIP), and 315-319 (PPFPS). The interval 168–319 (PPLNLPPLTF…KFGKWPPFPS (152 aa)) is 24 X 5 AA approximate repeats.

This sequence belongs to the plant proline-rich protein superfamily. In terms of tissue distribution, mostly expressed in aerial organs, particularly in expanding leaves, stems, flowers, and siliques.

It localises to the secreted. Its subcellular location is the cell wall. The protein is Proline-rich protein 2 (PRP2) of Arabidopsis thaliana (Mouse-ear cress).